A 534-amino-acid chain; its full sequence is Pentatricopeptide repeat-containing protein At1g07590, mitochondrial (534 aa).

The transit peptide at 1–20 (MRSIIALMRQREYFVQAIRR) directs the protein to the mitochondrion. PPR repeat units lie at residues 165–199 (NELL…GYRT), 200–234 (SHLV…KATP), 235–269 (HVST…GVEP), 270–300 (NEVS…IEKS), 305–335 (NWST…IRGF), 339–369 (RSKS…MKNV), 374–408 (ETEQ…GFKP), 409–443 (NSIT…KTSK), and 451–485 (WLET…KYNR).

This sequence belongs to the PPR family. P subfamily.

It is found in the mitochondrion. The polypeptide is Pentatricopeptide repeat-containing protein At1g07590, mitochondrial (Arabidopsis thaliana (Mouse-ear cress)).